Reading from the N-terminus, the 351-residue chain is MASGQMAPSLLRRPITFVSSCPPALRSFGALCPPTGSTDLIGGTGRDILIAAAPARRAPLHATLPLLRSLHTSPAPQLSASHQHQAQQQQQQTKQPQQPYDPQQDQVPSTSTASSSKPAADPVYNLPNAVSVARLVSGPLIGYWLVQGHYEAATLALAVSGASDWLDGWLARRLGASSVFGSYLDPLADKVLIGCVAAALLMNGAMPGWVAGVVVGRDVLLVAGSFVFRLRGFGWRWPGAAAFFRTVDTSAAAAGAATGAANGVASGGGGGGEGVSFMRPLLISKANTVLQLLLLGGYLLRGMDGGAGLQLLLPGGGGEELIMGLELATAATTVASGLAYGTMAVQGKLFK.

Positions 74–120 are disordered; sequence PAPQLSASHQHQAQQQQQQTKQPQQPYDPQQDQVPSTSTASSSKPAA. Residues 76-120 show a composition bias toward low complexity; that stretch reads PQLSASHQHQAQQQQQQTKQPQQPYDPQQDQVPSTSTASSSKPAA. 5 helical membrane passes run 139–159, 191–211, 251–271, 280–300, and 321–341; these read PLIG…ALAV, VLIG…GWVA, AAAA…GGGG, PLLI…GYLL, and LIMG…LAYG.

This sequence belongs to the CDP-alcohol phosphatidyltransferase class-I family. Mn(2+) serves as cofactor.

Its subcellular location is the mitochondrion inner membrane. It carries out the reaction a CDP-1,2-diacyl-sn-glycerol + a 1,2-diacyl-sn-glycero-3-phospho-(1'-sn-glycerol) = a cardiolipin + CMP + H(+). In terms of biological role, catalyzes the synthesis of cardiolipin (CL) (diphosphatidylglycerol) by specifically transferring a phosphatidyl group from CDP-diacylglycerol to phosphatidylglycerol (PG). CL is a key phospholipid in mitochondrial membranes and plays important roles in maintaining the functional integrity and dynamics of mitochondria under both optimal and stress conditions. Cannot catalyze the phosphatidyl group transfer from one PG molecule to another to form CL. This Chlamydomonas reinhardtii (Chlamydomonas smithii) protein is Cardiolipin synthase (CMP-forming).